Here is a 248-residue protein sequence, read N- to C-terminus: 3-deoxy-manno-octulosonate cytidylyltransferase (248 aa).

This sequence belongs to the KdsB family.

Its subcellular location is the cytoplasm. The catalysed reaction is 3-deoxy-alpha-D-manno-oct-2-ulosonate + CTP = CMP-3-deoxy-beta-D-manno-octulosonate + diphosphate. The protein operates within nucleotide-sugar biosynthesis; CMP-3-deoxy-D-manno-octulosonate biosynthesis; CMP-3-deoxy-D-manno-octulosonate from 3-deoxy-D-manno-octulosonate and CTP: step 1/1. It functions in the pathway bacterial outer membrane biogenesis; lipopolysaccharide biosynthesis. Its function is as follows. Activates KDO (a required 8-carbon sugar) for incorporation into bacterial lipopolysaccharide in Gram-negative bacteria. The polypeptide is 3-deoxy-manno-octulosonate cytidylyltransferase (Photobacterium profundum (strain SS9)).